We begin with the raw amino-acid sequence, 194 residues long: Protein phosphatase 1 regulatory subunit 1B (194 aa).

Met1 carries the post-translational modification N-acetylmethionine. The tract at residues 1-194 is disordered; the sequence is MDPKDRKKIQ…GEEPQHPSPP (194 aa). Position 34 is a phosphothreonine; by PKA (Thr34). Residues 41-63 are compositionally biased toward basic and acidic residues; it reads VSEHSSPEEEASPHQRTSGEGHH. Phosphoserine occurs at positions 45 and 46. Thr75 is modified (phosphothreonine). Over residues 84-95 the composition is skewed to polar residues; that stretch reads HLQTISNLSENQ. Residues Ser97 and Ser130 each carry the phosphoserine modification. Residues 113-131 show a composition bias toward acidic residues; the sequence is QEDDEEDEDEEEDEEEDSQ. Residues 160–170 are compositionally biased toward basic and acidic residues; it reads PPLDEPQRDGN. Residue Ser192 is modified to Phosphoserine.

This sequence belongs to the protein phosphatase inhibitor 1 family. In terms of processing, dopamine- and cyclic AMP-regulated neuronal phosphoprotein. Phosphorylation of Thr-34 is required for activity.

The protein resides in the cytoplasm. Inhibitor of protein-phosphatase 1. This chain is Protein phosphatase 1 regulatory subunit 1B (Ppp1r1b), found in Mus musculus (Mouse).